Consider the following 361-residue polypeptide: Cdc42 effector protein 1 (361 aa).

Residues 1–29 (MPGPQGAGGAPAMNLGKLSPVGWVSSSQG) form a disordered region. Phosphoserine occurs at positions 19 and 27. Position 34 is a phosphothreonine (threonine 34). The CRIB domain maps to 38–52 (ISPPLGDFRHTMHVG). Serine 39 is modified (phosphoserine). An Omega-N-methylarginine modification is found at arginine 53. 11 positions are modified to phosphoserine: serine 65, serine 73, serine 77, serine 101, serine 113, serine 121, serine 139, serine 180, serine 190, serine 192, and serine 195. Residues 161-186 (CTISRLPRPEKPRDRDRDSSFPAEPE) are disordered. Residues 167–186 (PRPEKPRDRDRDSSFPAEPE) show a composition bias toward basic and acidic residues. Disordered regions lie at residues 218-300 (EGSA…SRHH) and 320-361 (SWGS…EVKV). A run of 4 repeats spans residues 220 to 226 (SAAETPA), 229 to 235 (PAASPPA), 236 to 242 (SVANPPA), and 243 to 249 (PASSPSL). A 4 X 7 AA tandem repeats of [PT]-[AT]-A-[ENT]-[PT]-[PTS]-[AG] region spans residues 220 to 249 (SAAETPAPAPAASPPASVANPPAPASSPSL). Phosphoserine is present on residues serine 270, serine 320, and serine 323. Polar residues predominate over residues 332–347 (QAGSRTPVPSTVQANT). The segment covering 351 to 361 (ADAEEDDEVKV) has biased composition (acidic residues).

The protein belongs to the BORG/CEP family. In terms of assembly, interacts with RHOQ and CDC42, in a GTP-dependent manner.

The protein resides in the endomembrane system. It localises to the cytoplasm. Its subcellular location is the cytoskeleton. Its function is as follows. Probably involved in the organization of the actin cytoskeleton. Induced membrane extensions in fibroblasts. The chain is Cdc42 effector protein 1 from Bos taurus (Bovine).